We begin with the raw amino-acid sequence, 612 residues long: UBA domain-containing protein 6 (612 aa).

The UBA domain maps to 3-42 (DLDTKIKTLKNMGVSESDAKDSLERCGYDVESAAEFIFSG). S595 carries the phosphoserine modification.

Its subcellular location is the cytoplasm. It is found in the nucleus. In Schizosaccharomyces pombe (strain 972 / ATCC 24843) (Fission yeast), this protein is UBA domain-containing protein 6 (ucp6).